Here is a 1180-residue protein sequence, read N- to C-terminus: Neurexin like receptor 1 (1180 aa).

The signal sequence occupies residues 1–20; that stretch reads MSGLCLVLLLSIFAVSQSSG. Residues 21-1108 lie on the Extracellular side of the membrane; sequence ECSDVSFSSV…SQNKQDLVSK (1088 aa). In terms of domain architecture, Laminin G-like 1 spans 124–290; that stretch reads PITAFDDSSY…LSPNEVHNQC (167 aa). Asparagine 229 carries N-linked (GlcNAc...) asparagine glycosylation. Cysteine 267 and cysteine 290 are disulfide-bonded. N-linked (GlcNAc...) asparagine glycans are attached at residues asparagine 302, asparagine 336, asparagine 355, and asparagine 436. One can recognise an EGF-like 1 domain in the interval 444 to 481; sequence FQEKCLPNPCENGGGCVQSALDDYVCNCKEGYKGKNCH. 3 disulfides stabilise this stretch: cysteine 448–cysteine 459, cysteine 453–cysteine 469, and cysteine 471–cysteine 480. N-linked (GlcNAc...) asparagine glycans are attached at residues asparagine 522 and asparagine 636. The Laminin G-like 2 domain occupies 695–863; sequence TFDPVTFSNR…GVAIGDDGYC (169 aa). An EGF-like 2 domain is found at 859–896; it reads DDGYCRPDLCQNGGQCVDKYDGYVCDCSMTPFGGSDCT. Cystine bridges form between cysteine 863-cysteine 874, cysteine 868-cysteine 883, and cysteine 885-cysteine 895. Residues asparagine 933, asparagine 949, asparagine 978, asparagine 997, asparagine 1011, and asparagine 1052 are each glycosylated (N-linked (GlcNAc...) asparagine). Residues 1109-1129 traverse the membrane as a helical segment; that stretch reads AIIGGGILALSLFILCMSSLI. The Cytoplasmic segment spans residues 1130–1180; the sequence is CYMRSRPEGVYKTNETGENCSPSRSEEPLVHNTTSNNNNNPTYASNKEYFC. A compositionally biased stretch (polar residues) spans 1142–1152; the sequence is TNETGENCSPS. A disordered region spans residues 1142–1180; that stretch reads TNETGENCSPSRSEEPLVHNTTSNNNNNPTYASNKEYFC. Positions 1161–1171 are enriched in low complexity; the sequence is NTTSNNNNNPT.

It belongs to the neurexin family. In terms of assembly, interacts (via the intracellular domain) with F-actin; the interaction is required for anchoring F-actin at the membrane for gap junction formation. Highly expressed in pharyngeal g1 and g2 gland cells, pharyngeal muscle cells and the unilateral GABAergic RIS interneuron (at protein level). Expressed in pm5 pharyngeal muscle cells and the nerve ring.

It is found in the cell membrane. The protein resides in the cell junction. The protein localises to the gap junction. Its function is as follows. Required for gap junction formation, playing a role in anchoring the cytoskeletal component F-actin to the membrane of adjacent cells and thus facilitating the formation of gap junction channels in embryonic cells, muscle cells and neuronal cells. Plays a role in maintaining gap junction activity to promote pharyngeal muscle contraction. The chain is Neurexin like receptor 1 from Caenorhabditis elegans.